Consider the following 639-residue polypeptide: Chaperone protein DnaK (639 aa).

Thr-195 bears the Phosphothreonine; by autocatalysis mark. Over residues 601-618 (NAAAGAAPAGEPAPGEPQ) the composition is skewed to low complexity. Positions 601-639 (NAAAGAAPAGEPAPGEPQAEQKKDDGVIDAEYVDVDEKK) are disordered. The span at 627 to 639 (VIDAEYVDVDEKK) shows a compositional bias: acidic residues.

This sequence belongs to the heat shock protein 70 family.

Acts as a chaperone. In Acidobacterium capsulatum (strain ATCC 51196 / DSM 11244 / BCRC 80197 / JCM 7670 / NBRC 15755 / NCIMB 13165 / 161), this protein is Chaperone protein DnaK.